We begin with the raw amino-acid sequence, 230 residues long: Large ribosomal subunit protein uL1 (230 aa).

The protein belongs to the universal ribosomal protein uL1 family. As to quaternary structure, part of the 50S ribosomal subunit.

Its function is as follows. Binds directly to 23S rRNA. The L1 stalk is quite mobile in the ribosome, and is involved in E site tRNA release. Functionally, protein L1 is also a translational repressor protein, it controls the translation of the L11 operon by binding to its mRNA. The polypeptide is Large ribosomal subunit protein uL1 (Bradyrhizobium sp. (strain BTAi1 / ATCC BAA-1182)).